The following is a 218-amino-acid chain: Thiopurine S-methyltransferase (218 aa).

Positions 10, 45, 66, and 123 each coordinate S-adenosyl-L-methionine.

The protein belongs to the class I-like SAM-binding methyltransferase superfamily. TPMT family.

Its subcellular location is the cytoplasm. The catalysed reaction is S-adenosyl-L-methionine + a thiopurine = S-adenosyl-L-homocysteine + a thiopurine S-methylether.. The polypeptide is Thiopurine S-methyltransferase (Xanthomonas axonopodis pv. citri (strain 306)).